Reading from the N-terminus, the 119-residue chain is Holo-[acyl-carrier-protein] synthase (119 aa).

Residues Asp-8 and Glu-58 each contribute to the Mg(2+) site.

The protein belongs to the P-Pant transferase superfamily. AcpS family. Requires Mg(2+) as cofactor.

The protein localises to the cytoplasm. It catalyses the reaction apo-[ACP] + CoA = holo-[ACP] + adenosine 3',5'-bisphosphate + H(+). In terms of biological role, transfers the 4'-phosphopantetheine moiety from coenzyme A to a Ser of acyl-carrier-protein. This chain is Holo-[acyl-carrier-protein] synthase, found in Bacillus mycoides (strain KBAB4) (Bacillus weihenstephanensis).